The sequence spans 146 residues: Ribosomal RNA large subunit methyltransferase H (146 aa).

S-adenosyl-L-methionine is bound by residues leucine 62, glycine 94, and 113–118; that span reads LGELTL.

It belongs to the RNA methyltransferase RlmH family. In terms of assembly, homodimer.

It localises to the cytoplasm. The catalysed reaction is pseudouridine(1915) in 23S rRNA + S-adenosyl-L-methionine = N(3)-methylpseudouridine(1915) in 23S rRNA + S-adenosyl-L-homocysteine + H(+). Specifically methylates the pseudouridine at position 1915 (m3Psi1915) in 23S rRNA. This is Ribosomal RNA large subunit methyltransferase H from Deinococcus radiodurans (strain ATCC 13939 / DSM 20539 / JCM 16871 / CCUG 27074 / LMG 4051 / NBRC 15346 / NCIMB 9279 / VKM B-1422 / R1).